Consider the following 146-residue polypeptide: Putative ankyrin repeat protein FPV224 (146 aa).

4 ANK repeats span residues 9 to 38 (SLST…DASI), 42 to 79 (KGIT…TRDI), 94 to 126 (YVFV…RIDE), and 127 to 145 (YYYS…KAVN).

This is Putative ankyrin repeat protein FPV224 from Fowlpox virus (strain NVSL) (FPV).